Here is a 245-residue protein sequence, read N- to C-terminus: Orotidine 5'-phosphate decarboxylase (245 aa).

Substrate contacts are provided by residues Asp-22, Lys-44, 71 to 80 (DLKFHDIPNT), Thr-131, Arg-192, Gln-201, Gly-221, and Arg-222. Lys-73 acts as the Proton donor in catalysis.

Belongs to the OMP decarboxylase family. Type 1 subfamily. As to quaternary structure, homodimer.

The enzyme catalyses orotidine 5'-phosphate + H(+) = UMP + CO2. Its pathway is pyrimidine metabolism; UMP biosynthesis via de novo pathway; UMP from orotate: step 2/2. Its function is as follows. Catalyzes the decarboxylation of orotidine 5'-monophosphate (OMP) to uridine 5'-monophosphate (UMP). The chain is Orotidine 5'-phosphate decarboxylase from Salmonella typhimurium (strain LT2 / SGSC1412 / ATCC 700720).